A 120-amino-acid polypeptide reads, in one-letter code: Chaperonin GroEL (120 aa).

ATP is bound at residue 23–27 (DGTTT).

The protein belongs to the chaperonin (HSP60) family. As to quaternary structure, forms a cylinder of 14 subunits composed of two heptameric rings stacked back-to-back. Interacts with the co-chaperonin GroES.

It localises to the cytoplasm. It catalyses the reaction ATP + H2O + a folded polypeptide = ADP + phosphate + an unfolded polypeptide.. Together with its co-chaperonin GroES, plays an essential role in assisting protein folding. The GroEL-GroES system forms a nano-cage that allows encapsulation of the non-native substrate proteins and provides a physical environment optimized to promote and accelerate protein folding. The chain is Chaperonin GroEL from Mycolicibacterium rhodesiae (Mycobacterium rhodesiae).